A 1461-amino-acid chain; its full sequence is Autotransporter adhesin SadA (1461 aa).

Residues 1 to 54 (MNRIFKVLWNAATGTFVVTSETAKSRGKKNGRRKLAVSALIGLSSIMVSADALA) form the signal peptide. A surface exposed passenger domain region spans residues 55–1372 (NAGNDTGDGV…EEANTYTDQK (1318 aa)). Residues 1373–1461 (MGEMNSKIKG…SAAIGAGFQW (89 aa)) form a translocator domain region. Transmembrane regions (beta stranded) follow at residues 1407-1417 (GANMTSIAGGT), 1421-1431 (ESAVAIGVSMV), 1440-1446 (KLQGTSN), and 1450-1461 (DYSAAIGAGFQW).

It belongs to the autotransporter-2 (AT-2) (TC 1.B.40) family. Homotrimer.

It localises to the cell surface. It is found in the cell outer membrane. Involved in cell aggregation, biofilm formation, and adhesion to human intestinal epithelial cells. This Salmonella typhimurium (strain LT2 / SGSC1412 / ATCC 700720) protein is Autotransporter adhesin SadA.